A 349-amino-acid polypeptide reads, in one-letter code: uncharacterized protein (349 aa).

The signal sequence occupies residues 1–25; that stretch reads MNKYIKQGAPILGILLAVMFGGREG.

This sequence belongs to the bacterial solute-binding protein 1 family. WtpA subfamily.

This is an uncharacterized protein from Methanococcus aeolicus (strain ATCC BAA-1280 / DSM 17508 / OCM 812 / Nankai-3).